A 550-amino-acid chain; its full sequence is MDQRRLVLFLVFSLSLVMLWNAWLKQSQPAPTAVTATAGVEGAGVPTPTTGVAPGATTAVPGVPGAATASTAPRMVVRTDLMVAEVSAQGGDIVRLELAQHKATADKTKNFVLFDDGTIHLYAAQSGLIGEDLPTHKTTFALPQGEQVLKEGEDRLVVRLEAPEQDGVKVTKVMTFHRGNYLVDVAYEIVNSSERTLSPHAYYQLTRDGKPAESVEAFGVTTFTGPAFYTDAEKFQKVQFEEIAEGKAKFVKKASDGWIAMVQHYFVSAWLPQGGTEREFFAQKVGNDLYSAGVIVPVAAIQPGQSGRVEASLYAGPQEQDKLEDIAPGLDLVVDYGWLTVIAAPLFWVLSWIHGVVGNWGWAIIIVTILIKLMFFPLSAASYKSMAKMRVLGPRMQRLKELYGNDKAKMQQEMMEMYRKEKINPLGGCLPILVQIPVFISLYWVLLGSVEMRQAPWLGWIQDLSAKDPYFILPVIMGVSMLIQMKLNPTPPDPIQAKVMMAMPVIFTFMFLWFPSGLVLYWVVNNILSIAQQWQITRMIESEKSGAKPA.

The next 6 membrane-spanning stretches (helical) occupy residues 6–26, 333–353, 356–376, 430–450, 469–489, and 504–524; these read LVLF…WLKQ, VVDY…LSWI, VVGN…LMFF, LPIL…LGSV, PYFI…KLNP, and PVIF…YWVV.

It belongs to the OXA1/ALB3/YidC family. Type 1 subfamily. In terms of assembly, interacts with the Sec translocase complex via SecD. Specifically interacts with transmembrane segments of nascent integral membrane proteins during membrane integration.

It is found in the cell inner membrane. Functionally, required for the insertion and/or proper folding and/or complex formation of integral membrane proteins into the membrane. Involved in integration of membrane proteins that insert both dependently and independently of the Sec translocase complex, as well as at least some lipoproteins. Aids folding of multispanning membrane proteins. This chain is Membrane protein insertase YidC, found in Aromatoleum aromaticum (strain DSM 19018 / LMG 30748 / EbN1) (Azoarcus sp. (strain EbN1)).